We begin with the raw amino-acid sequence, 120 residues long: Large ribosomal subunit protein uL18 (120 aa).

Belongs to the universal ribosomal protein uL18 family. In terms of assembly, part of the 50S ribosomal subunit; part of the 5S rRNA/L5/L18/L25 subcomplex. Contacts the 5S and 23S rRNAs.

This is one of the proteins that bind and probably mediate the attachment of the 5S RNA into the large ribosomal subunit, where it forms part of the central protuberance. This is Large ribosomal subunit protein uL18 from Maricaulis maris (strain MCS10) (Caulobacter maris).